A 238-amino-acid chain; its full sequence is Ribonuclease PH (238 aa).

Residues arginine 86 and 124 to 126 (GTR) each bind phosphate.

Belongs to the RNase PH family. Homodimer. Has a tendency to aggregate into multimers. The cofactor is Mg(2+).

The catalysed reaction is tRNA(n+1) + phosphate = tRNA(n) + a ribonucleoside 5'-diphosphate. In terms of biological role, phosphorolytic exoribonuclease that plays an important role in tRNA 3'-end maturation; has no activity on a tRNA precursor with a 3'-terminal phosphate group. In vitro is freely reversible, adds nucleotides to the ends of RNA molecules by using nucleoside diphosphates as substrates, but this may not be physiologically important. Probably plays a role in initiation of 16S rRNA degradation (leading to ribosome degradation) during starvation. The chain is Ribonuclease PH from Escherichia coli (strain K12 / MC4100 / BW2952).